The primary structure comprises 529 residues: Glycerol kinase 5 (529 aa).

Positions 22 and 23 each coordinate ATP. Residues Arg-92, Asp-269, and Gln-270 each contribute to the glycerol site. Thr-291, Gly-334, and Gly-434 together coordinate ATP.

The protein belongs to the FGGY kinase family.

The protein resides in the cytoplasm. The enzyme catalyses glycerol + ATP = sn-glycerol 3-phosphate + ADP + H(+). The protein operates within polyol metabolism; glycerol degradation via glycerol kinase pathway; sn-glycerol 3-phosphate from glycerol: step 1/1. Functionally, skin-specific kinase that plays a key role in glycerol metabolism, catalyzing its phosphorylation to produce sn-glycerol 3-phosphate. Involved in skin-specific regulation of sterol regulatory element-binding protein (SREBP) processing and lipid biosynthesis. The chain is Glycerol kinase 5 (gk5) from Danio rerio (Zebrafish).